We begin with the raw amino-acid sequence, 100 residues long: uncharacterized protein (100 aa).

This is an uncharacterized protein from Clostridium tetanomorphum.